The following is a 348-amino-acid chain: Holliday junction branch migration complex subunit RuvB (348 aa).

The tract at residues 1–182 (MRIELLNTPA…FGINSRFDYY (182 aa)) is large ATPase domain (RuvB-L). ATP contacts are provided by residues I21, R22, G63, K66, T67, T68, 129 to 131 (EDF), R172, Y182, and R219. Mg(2+) is bound at residue T67. A small ATPAse domain (RuvB-S) region spans residues 183-253 (SADLLEKIII…IAMTTLDCLE (71 aa)). Residues 256 to 348 (EEGLDDMDKK…EFPLEDDQRQ (93 aa)) are head domain (RuvB-H). Residues R311 and R316 each contribute to the DNA site.

Belongs to the RuvB family. As to quaternary structure, homohexamer. Forms an RuvA(8)-RuvB(12)-Holliday junction (HJ) complex. HJ DNA is sandwiched between 2 RuvA tetramers; dsDNA enters through RuvA and exits via RuvB. An RuvB hexamer assembles on each DNA strand where it exits the tetramer. Each RuvB hexamer is contacted by two RuvA subunits (via domain III) on 2 adjacent RuvB subunits; this complex drives branch migration. In the full resolvosome a probable DNA-RuvA(4)-RuvB(12)-RuvC(2) complex forms which resolves the HJ.

The protein localises to the cytoplasm. The catalysed reaction is ATP + H2O = ADP + phosphate + H(+). In terms of biological role, the RuvA-RuvB-RuvC complex processes Holliday junction (HJ) DNA during genetic recombination and DNA repair, while the RuvA-RuvB complex plays an important role in the rescue of blocked DNA replication forks via replication fork reversal (RFR). RuvA specifically binds to HJ cruciform DNA, conferring on it an open structure. The RuvB hexamer acts as an ATP-dependent pump, pulling dsDNA into and through the RuvAB complex. RuvB forms 2 homohexamers on either side of HJ DNA bound by 1 or 2 RuvA tetramers; 4 subunits per hexamer contact DNA at a time. Coordinated motions by a converter formed by DNA-disengaged RuvB subunits stimulates ATP hydrolysis and nucleotide exchange. Immobilization of the converter enables RuvB to convert the ATP-contained energy into a lever motion, pulling 2 nucleotides of DNA out of the RuvA tetramer per ATP hydrolyzed, thus driving DNA branch migration. The RuvB motors rotate together with the DNA substrate, which together with the progressing nucleotide cycle form the mechanistic basis for DNA recombination by continuous HJ branch migration. Branch migration allows RuvC to scan DNA until it finds its consensus sequence, where it cleaves and resolves cruciform DNA. The polypeptide is Holliday junction branch migration complex subunit RuvB (Chlorobium limicola (strain DSM 245 / NBRC 103803 / 6330)).